A 236-amino-acid polypeptide reads, in one-letter code: Protein Thf1 (236 aa).

Positions 180 to 220 form a coiled coil; it reads PVEKMQKDLEQYRSNLEKMTQARKTLEDIVAAERKRRQQNA. Residues 206–236 form a disordered region; the sequence is EDIVAAERKRRQQNAAPDRSPESASATEAPN. Residues 227-236 are compositionally biased toward polar residues; the sequence is ESASATEAPN.

This sequence belongs to the THF1 family.

In terms of biological role, may be involved in photosynthetic membrane biogenesis. The chain is Protein Thf1 from Cyanothece sp. (strain PCC 7425 / ATCC 29141).